A 562-amino-acid polypeptide reads, in one-letter code: Teichoic acid ribitol-phosphate polymerase TarL (562 aa).

This sequence belongs to the CDP-glycerol glycerophosphotransferase family.

The protein localises to the cell membrane. The enzyme catalyses 4-O-[di(2R)-glycerylphospho]-N-acetyl-beta-D-mannosaminyl-(1-&gt;4)-N-acetyl-alpha-D-glucosaminyl di-trans,octa-cis-undecaprenyl diphosphate + n CDP-L-ribitol = 4-O-[(D-ribitylphospho)(n)-di{(2R)-glycerylphospho}]-N-acetyl-beta-D-mannosaminyl-(1-&gt;4)-N-acetyl-alpha-D-glucosaminyl di-trans,octa-cis-undecaprenyl diphosphate + n CMP + n H(+). Its pathway is cell wall biogenesis; poly(ribitol phosphate) teichoic acid biosynthesis. Functionally, responsible for the polymerization of the main chain of the major teichoic acid by sequential transfer of ribitol phosphate units from CDP-ribitol to the second glycerol phosphate attached to the disaccharide linkage unit. Synthesizes polymers of more than 40 ribitol phosphate units in length. In Staphylococcus aureus (strain NCTC 8325 / PS 47), this protein is Teichoic acid ribitol-phosphate polymerase TarL (tarL).